The chain runs to 521 residues: GMP synthase [glutamine-hydrolyzing] (521 aa).

Positions 5–197 constitute a Glutamine amidotransferase type-1 domain; it reads KILILDFGSQ…VLDICGAQPG (193 aa). Catalysis depends on C81, which acts as the Nucleophile. Catalysis depends on residues H171 and E173. One can recognise a GMPS ATP-PPase domain in the interval 198–390; it reads WTMPNYIEEA…LGLPREMVYR (193 aa). 225–231 lines the ATP pocket; that stretch reads SGGVDSS.

Homodimer.

The catalysed reaction is XMP + L-glutamine + ATP + H2O = GMP + L-glutamate + AMP + diphosphate + 2 H(+). It functions in the pathway purine metabolism; GMP biosynthesis; GMP from XMP (L-Gln route): step 1/1. In terms of biological role, catalyzes the synthesis of GMP from XMP. The chain is GMP synthase [glutamine-hydrolyzing] from Neisseria gonorrhoeae (strain ATCC 700825 / FA 1090).